The following is a 210-amino-acid chain: Probable HTH-type transcriptional regulator ArpR (210 aa).

Positions 10-70 (QETRAQIIEA…ALLDSLHETH (61 aa)) constitute an HTH tetR-type domain. The segment at residues 33 to 52 (TLADIAELAGVTRGAIYWHF) is a DNA-binding region (H-T-H motif).

Probable regulatory protein for the antibiotic efflux pump arpABC operon. May function as a repressor. The sequence is that of Probable HTH-type transcriptional regulator ArpR (arpR) from Pseudomonas putida (Arthrobacter siderocapsulatus).